A 943-amino-acid polypeptide reads, in one-letter code: Isoleucine--tRNA ligase (943 aa).

The short motif at 58–68 (PYANGNIHIGH) is the 'HIGH' region element. Glu567 is an L-isoleucyl-5'-AMP binding site. A 'KMSKS' region motif is present at residues 608–612 (KMSKS). Position 611 (Lys611) interacts with ATP. Zn(2+)-binding residues include Cys906, Cys909, Cys926, and Cys929.

This sequence belongs to the class-I aminoacyl-tRNA synthetase family. IleS type 1 subfamily. As to quaternary structure, monomer. It depends on Zn(2+) as a cofactor.

It is found in the cytoplasm. It carries out the reaction tRNA(Ile) + L-isoleucine + ATP = L-isoleucyl-tRNA(Ile) + AMP + diphosphate. Catalyzes the attachment of isoleucine to tRNA(Ile). As IleRS can inadvertently accommodate and process structurally similar amino acids such as valine, to avoid such errors it has two additional distinct tRNA(Ile)-dependent editing activities. One activity is designated as 'pretransfer' editing and involves the hydrolysis of activated Val-AMP. The other activity is designated 'posttransfer' editing and involves deacylation of mischarged Val-tRNA(Ile). This Pseudomonas savastanoi pv. phaseolicola (strain 1448A / Race 6) (Pseudomonas syringae pv. phaseolicola (strain 1448A / Race 6)) protein is Isoleucine--tRNA ligase.